A 231-amino-acid polypeptide reads, in one-letter code: Eukaryotic translation initiation factor 4E allele A (231 aa).

Residues 1 to 20 (MAAAEMERTTSFDAAEKLKA) are compositionally biased toward basic and acidic residues. Residues 1-36 (MAAAEMERTTSFDAAEKLKAADAGGGEVDDELEEGE) form a disordered region. Positions 27-36 (EVDDELEEGE) are enriched in acidic residues. 2 EIF4G-binding regions span residues 56–59 (HPLE) and 66–102 (FDSP…NNIH). MRNA is bound by residues 74–79 (RQTAWG), Lys106, and 124–125 (WE). The cysteines at positions 129 and 167 are disulfide-linked. The tract at residues 150–159 (YTLLAMIGHQ) is EIF4G-binding. MRNA is bound by residues 174 to 179 (RSKGEK) and 219 to 223 (KRLDR).

It belongs to the eukaryotic initiation factor 4E family. As to quaternary structure, EIF4F is a multi-subunit complex, the composition of which varies with external and internal environmental conditions. It is composed of at least EIF4A, EIF4E and EIF4G. EIF4E is also known to interact with other partners. In higher plants two isoforms of EIF4F have been identified, named isoform EIF4F and isoform EIF(iso)4F. Isoform EIF4F has subunits p220 and p26, whereas isoform EIF(iso)4F has subunits p82 and p28. (Microbial infection) Interacts with viral genome-linked protein (VPg); this interaction is possible in susceptible hosts but impaired in resistant plants. Post-translationally, according to the redox status, the Cys-129-Cys-167 disulfide bridge may have a role in regulating protein function by affecting its ability to bind capped mRNA.

It localises to the nucleus. The protein localises to the cytoplasm. Component of the protein complex eIF4F, which is involved in the recognition of the mRNA cap, ATP-dependent unwinding of 5'-terminal secondary structure and recruitment of mRNA to the ribosome. Recognizes and binds the 7-methylguanosine-containing mRNA cap during an early step in the initiation of protein synthesis and facilitates ribosome binding by inducing the unwinding of the mRNAs secondary structures. Key component of recessive resistance to potyviruses. Functionally, (Microbial infection) Susceptibility host factor required for viral infection (e.g. Potato virus Y (PVY)) by recruiting viral RNAs to the host ribosomal complex via an interaction with viral genome-linked protein (VPg). This chain is Eukaryotic translation initiation factor 4E allele A, found in Solanum tuberosum (Potato).